The following is a 243-amino-acid chain: 7-cyano-7-deazaguanine synthase (243 aa).

Residue 18-28 (FSGGQDSATCL) participates in ATP binding. 4 residues coordinate Zn(2+): C206, C221, C224, and C227.

The protein belongs to the QueC family. The cofactor is Zn(2+).

It carries out the reaction 7-carboxy-7-deazaguanine + NH4(+) + ATP = 7-cyano-7-deazaguanine + ADP + phosphate + H2O + H(+). It functions in the pathway purine metabolism; 7-cyano-7-deazaguanine biosynthesis. In terms of biological role, catalyzes the ATP-dependent conversion of 7-carboxy-7-deazaguanine (CDG) to 7-cyano-7-deazaguanine (preQ(0)). The chain is 7-cyano-7-deazaguanine synthase from Maricaulis maris (strain MCS10) (Caulobacter maris).